Consider the following 244-residue polypeptide: Anti-H(O) lectin 1 (244 aa).

Residues Asn-113 and Asn-117 are each glycosylated (N-linked (GlcNAc...) asparagine). Residues Glu-127 and Asp-129 each contribute to the Mn(2+) site. 4 residues coordinate Ca(2+): Asp-129, Tyr-131, Asn-137, and Asp-142. Residues Asp-142 and His-145 each coordinate Mn(2+).

It belongs to the leguminous lectin family. In terms of assembly, homotetramer.

In terms of biological role, di-N-acetylchitobiose-binding anti-H(O) lectin. The chain is Anti-H(O) lectin 1 from Cytisophyllum sessilifolium (Sessile-leaved cytisus).